Consider the following 342-residue polypeptide: N-acetyl-gamma-glutamyl-phosphate reductase (342 aa).

Residue Cys-149 is part of the active site.

It belongs to the NAGSA dehydrogenase family. Type 1 subfamily.

It localises to the cytoplasm. The enzyme catalyses N-acetyl-L-glutamate 5-semialdehyde + phosphate + NADP(+) = N-acetyl-L-glutamyl 5-phosphate + NADPH + H(+). Its pathway is amino-acid biosynthesis; L-arginine biosynthesis; N(2)-acetyl-L-ornithine from L-glutamate: step 3/4. In terms of biological role, catalyzes the NADPH-dependent reduction of N-acetyl-5-glutamyl phosphate to yield N-acetyl-L-glutamate 5-semialdehyde. The sequence is that of N-acetyl-gamma-glutamyl-phosphate reductase from Rhodobacter capsulatus (strain ATCC BAA-309 / NBRC 16581 / SB1003).